A 430-amino-acid chain; its full sequence is C4-dicarboxylate transport protein (430 aa).

Helical transmembrane passes span V9 to P29, L45 to M65, L79 to L99, G149 to G169, V185 to M205, L223 to A243, I308 to M328, and A356 to I376.

Belongs to the dicarboxylate/amino acid:cation symporter (DAACS) (TC 2.A.23) family.

It is found in the cell inner membrane. In terms of biological role, responsible for the transport of dicarboxylates such as succinate, fumarate, and malate from the periplasm across the membrane. The protein is C4-dicarboxylate transport protein of Burkholderia orbicola (strain MC0-3).